We begin with the raw amino-acid sequence, 251 residues long: Insulin-induced gene 1 protein (251 aa).

The Cytoplasmic segment spans residues 1 to 58; that stretch reads MQTLEEHCWSCSCTRGRDKKGTRLSTWLAQRAAKAMSSLNSLLSLAYHTLASSEGRSL. A helical membrane pass occupies residues 59 to 81; that stretch reads IRRSLVLFAVGVFLALVLNLLQI. Over 82-100 the chain is Extracellular; sequence QRNVTLFPEEVIATIFSSA. A helical membrane pass occupies residues 101-118; the sequence is WWVPPCCGTAAAVVGLLY. Residues 119–133 lie on the Cytoplasmic side of the membrane; the sequence is PCIDSHLGEPHKFKR. A helical transmembrane segment spans residues 134–156; it reads EWASVMRCIAVFVGINHASAKLD. Residues 157-159 lie on the Extracellular side of the membrane; the sequence is FAN. The helical transmembrane segment at 160 to 178 threads the bilayer; that stretch reads NVQLSLTLAALSLGLWWTF. Residues 179-183 lie on the Cytoplasmic side of the membrane; it reads DRSRS. A helical membrane pass occupies residues 184–205; the sequence is GLGLGITIAFLATLITQFLVYN. Topologically, residues 206 to 219 are extracellular; it reads GVYQYTSPDFLYIR. Residues 220–237 traverse the membrane as a helical segment; sequence SWLPCIFFSGGVTVGNIG. Over 238–251 the chain is Cytoplasmic; that stretch reads RQLAMGSSEKTHSD. Positions 245–251 match the KxHxx motif; that stretch reads SEKTHSD.

The protein belongs to the INSIG family. In terms of assembly, interacts with scap; interaction is direct and only takes place in the presence of sterols; it prevents interaction between scap and the coat protein complex II (COPII). Associates with the SCAP-SREBP complex; association is mediated via its interaction with scap and only takes place in the presence of sterols.

It localises to the endoplasmic reticulum membrane. Oxysterol-binding protein that mediates feedback control of cholesterol synthesis by controlling both endoplasmic reticulum to Golgi transport of scap and degradation of hmgcr. Acts as a negative regulator of cholesterol biosynthesis by mediating the retention of the SCAP-SREBP complex in the endoplasmic reticulum, thereby blocking the processing of sterol regulatory element-binding proteins (SREBPs). Binds oxysterol, including 25-hydroxycholesterol, regulating interaction with scap and retention of the SCAP-SREBP complex in the endoplasmic reticulum. In presence of oxysterol, interacts with scap, retaining the SCAP-SREBP complex in the endoplasmic reticulum, thereby preventing scap from escorting SREBPs to the Golgi. Sterol deprivation reduces oxysterol-binding, disrupting the interaction between insig1 and scap, thereby promoting Golgi transport of the SCAP-SREBP complex, followed by processing and nuclear translocation of SREBPs. Also regulates cholesterol synthesis by regulating degradation of hmgcr. The protein is Insulin-induced gene 1 protein of Xenopus tropicalis (Western clawed frog).